Here is a 554-residue protein sequence, read N- to C-terminus: CTP synthase (554 aa).

Positions 1 to 265 are amidoligase domain; the sequence is MTPLIFVTGG…DEIVVNQLKL (265 aa). Ser13 contacts CTP. Ser13 is a UTP binding site. ATP-binding positions include 14–19 and Asp71; that span reads SLGKGI. The Mg(2+) site is built by Asp71 and Glu139. CTP-binding positions include 146 to 148, 186 to 191, and Lys222; these read DIE and KTKPTQ. UTP is bound by residues 186–191 and Lys222; that span reads KTKPTQ. One can recognise a Glutamine amidotransferase type-1 domain in the interval 292-545; it reads TIAVVGKYVD…IRAARERKAG (254 aa). Position 353 (Gly353) interacts with L-glutamine. Catalysis depends on Cys380, which acts as the Nucleophile; for glutamine hydrolysis. Residues 381-384, Glu404, and Arg471 contribute to the L-glutamine site; that span reads YGMQ. Residues His518 and Glu520 contribute to the active site.

Belongs to the CTP synthase family. In terms of assembly, homotetramer.

The catalysed reaction is UTP + L-glutamine + ATP + H2O = CTP + L-glutamate + ADP + phosphate + 2 H(+). It carries out the reaction L-glutamine + H2O = L-glutamate + NH4(+). The enzyme catalyses UTP + NH4(+) + ATP = CTP + ADP + phosphate + 2 H(+). Its pathway is pyrimidine metabolism; CTP biosynthesis via de novo pathway; CTP from UDP: step 2/2. With respect to regulation, allosterically activated by GTP, when glutamine is the substrate; GTP has no effect on the reaction when ammonia is the substrate. The allosteric effector GTP functions by stabilizing the protein conformation that binds the tetrahedral intermediate(s) formed during glutamine hydrolysis. Inhibited by the product CTP, via allosteric rather than competitive inhibition. Functionally, catalyzes the ATP-dependent amination of UTP to CTP with either L-glutamine or ammonia as the source of nitrogen. Regulates intracellular CTP levels through interactions with the four ribonucleotide triphosphates. This chain is CTP synthase, found in Stenotrophomonas maltophilia (strain R551-3).